The following is a 213-amino-acid chain: Uracil phosphoribosyltransferase (213 aa).

Residues arginine 78, arginine 103, and 131–139 contribute to the 5-phospho-alpha-D-ribose 1-diphosphate site; that span reads DPMLATGGT. Uracil is bound by residues isoleucine 197 and 202-204; that span reads GDA. Aspartate 203 is a binding site for 5-phospho-alpha-D-ribose 1-diphosphate.

The protein belongs to the UPRTase family. Mg(2+) serves as cofactor.

It catalyses the reaction UMP + diphosphate = 5-phospho-alpha-D-ribose 1-diphosphate + uracil. The protein operates within pyrimidine metabolism; UMP biosynthesis via salvage pathway; UMP from uracil: step 1/1. With respect to regulation, allosterically activated by GTP. Catalyzes the conversion of uracil and 5-phospho-alpha-D-ribose 1-diphosphate (PRPP) to UMP and diphosphate. The polypeptide is Uracil phosphoribosyltransferase (Bifidobacterium adolescentis (strain ATCC 15703 / DSM 20083 / NCTC 11814 / E194a)).